A 345-amino-acid chain; its full sequence is Anthranilate phosphoribosyltransferase (345 aa).

5-phospho-alpha-D-ribose 1-diphosphate-binding positions include G80, 83 to 84, T88, 90 to 93, 108 to 116, and S120; these read GD, NIST, and KHGNRSVSS. G80 provides a ligand contact to anthranilate. Position 92 (S92) interacts with Mg(2+). N111 is an anthranilate binding site. Residue R166 coordinates anthranilate. D225 and E226 together coordinate Mg(2+).

The protein belongs to the anthranilate phosphoribosyltransferase family. As to quaternary structure, homodimer. Requires Mg(2+) as cofactor.

It carries out the reaction N-(5-phospho-beta-D-ribosyl)anthranilate + diphosphate = 5-phospho-alpha-D-ribose 1-diphosphate + anthranilate. It participates in amino-acid biosynthesis; L-tryptophan biosynthesis; L-tryptophan from chorismate: step 2/5. Functionally, catalyzes the transfer of the phosphoribosyl group of 5-phosphorylribose-1-pyrophosphate (PRPP) to anthranilate to yield N-(5'-phosphoribosyl)-anthranilate (PRA). This is Anthranilate phosphoribosyltransferase from Desulforamulus reducens (strain ATCC BAA-1160 / DSM 100696 / MI-1) (Desulfotomaculum reducens).